The sequence spans 145 residues: Lysozyme-like protein 4 (145 aa).

The N-terminal stretch at 1–19 is a signal peptide; that stretch reads MKASVVLSLIGYLVVPSDT. In terms of domain architecture, C-type lysozyme spans 20–145; that stretch reads AVLGRCVVAK…LARWLDGCKL (126 aa). Intrachain disulfides connect C25–C143, C49–C130, C84–C95, and C91–C109. E54 is an active-site residue.

This sequence belongs to the glycosyl hydrolase 22 family. As to quaternary structure, monomer.

The protein localises to the secreted. Its subcellular location is the cytoplasmic vesicle. It is found in the secretory vesicle. The protein resides in the acrosome. It localises to the cell projection. The protein localises to the cilium. Its subcellular location is the flagellum. May be involved in fertilization. Has no detectable bacteriolytic and lysozyme activities in vitro. This Bos taurus (Bovine) protein is Lysozyme-like protein 4 (LYZL4).